We begin with the raw amino-acid sequence, 362 residues long: tRNA 2-selenouridine synthase (362 aa).

Positions 12–135 (FLNDTPLLDV…LRRFLIDEME (124 aa)) constitute a Rhodanese domain. Residue Cys-95 is the S-selanylcysteine intermediate of the active site.

The protein belongs to the SelU family. In terms of assembly, monomer.

The enzyme catalyses 5-methylaminomethyl-2-thiouridine(34) in tRNA + selenophosphate + (2E)-geranyl diphosphate + H2O + H(+) = 5-methylaminomethyl-2-selenouridine(34) in tRNA + (2E)-thiogeraniol + phosphate + diphosphate. The catalysed reaction is 5-methylaminomethyl-2-thiouridine(34) in tRNA + (2E)-geranyl diphosphate = 5-methylaminomethyl-S-(2E)-geranyl-thiouridine(34) in tRNA + diphosphate. It catalyses the reaction 5-methylaminomethyl-S-(2E)-geranyl-thiouridine(34) in tRNA + selenophosphate + H(+) = 5-methylaminomethyl-2-(Se-phospho)selenouridine(34) in tRNA + (2E)-thiogeraniol. It carries out the reaction 5-methylaminomethyl-2-(Se-phospho)selenouridine(34) in tRNA + H2O = 5-methylaminomethyl-2-selenouridine(34) in tRNA + phosphate. Its function is as follows. Involved in the post-transcriptional modification of the uridine at the wobble position (U34) of tRNA(Lys), tRNA(Glu) and tRNA(Gln). Catalyzes the conversion of 2-thiouridine (S2U-RNA) to 2-selenouridine (Se2U-RNA). Acts in a two-step process involving geranylation of 2-thiouridine (S2U) to S-geranyl-2-thiouridine (geS2U) and subsequent selenation of the latter derivative to 2-selenouridine (Se2U) in the tRNA chain. The protein is tRNA 2-selenouridine synthase of Alcanivorax borkumensis (strain ATCC 700651 / DSM 11573 / NCIMB 13689 / SK2).